We begin with the raw amino-acid sequence, 315 residues long: Ribosomal RNA small subunit methyltransferase H (315 aa).

S-adenosyl-L-methionine-binding positions include 36–38 (GGH), Asp56, Phe81, Asp103, and Gln110.

It belongs to the methyltransferase superfamily. RsmH family.

Its subcellular location is the cytoplasm. It carries out the reaction cytidine(1402) in 16S rRNA + S-adenosyl-L-methionine = N(4)-methylcytidine(1402) in 16S rRNA + S-adenosyl-L-homocysteine + H(+). In terms of biological role, specifically methylates the N4 position of cytidine in position 1402 (C1402) of 16S rRNA. This is Ribosomal RNA small subunit methyltransferase H from Idiomarina loihiensis (strain ATCC BAA-735 / DSM 15497 / L2-TR).